We begin with the raw amino-acid sequence, 513 residues long: Putative ribose/galactose/methyl galactoside import ATP-binding protein 2 (513 aa).

ABC transporter domains are found at residues 24 to 260 (LTAE…VGRE) and 270 to 510 (VPIG…VMEL). ATP is bound at residue 56–63 (GENGAGKS).

This sequence belongs to the ABC transporter superfamily. Carbohydrate importer 2 (CUT2) (TC 3.A.1.2) family.

Its subcellular location is the cell inner membrane. It carries out the reaction D-ribose(out) + ATP + H2O = D-ribose(in) + ADP + phosphate + H(+). The catalysed reaction is D-galactose(out) + ATP + H2O = D-galactose(in) + ADP + phosphate + H(+). Functionally, part of an ABC transporter complex involved in carbohydrate import. Could be involved in ribose, galactose and/or methyl galactoside import. Responsible for energy coupling to the transport system. In Rhizobium meliloti (strain 1021) (Ensifer meliloti), this protein is Putative ribose/galactose/methyl galactoside import ATP-binding protein 2.